Here is a 434-residue protein sequence, read N- to C-terminus: Tol-Pal system protein TolB (434 aa).

Positions 1-24 (MKFSAYLTTLFIVLFSLFIQTVQA) are cleaved as a signal peptide.

The protein belongs to the TolB family. As to quaternary structure, the Tol-Pal system is composed of five core proteins: the inner membrane proteins TolA, TolQ and TolR, the periplasmic protein TolB and the outer membrane protein Pal. They form a network linking the inner and outer membranes and the peptidoglycan layer.

It is found in the periplasm. Part of the Tol-Pal system, which plays a role in outer membrane invagination during cell division and is important for maintaining outer membrane integrity. In Histophilus somni (strain 2336) (Haemophilus somnus), this protein is Tol-Pal system protein TolB.